The following is a 390-amino-acid chain: Phosphopentomutase (390 aa).

Residues D9, D283, H288, D324, H325, and H336 each coordinate Mn(2+).

The protein belongs to the phosphopentomutase family. The cofactor is Mn(2+).

The protein resides in the cytoplasm. The enzyme catalyses 2-deoxy-alpha-D-ribose 1-phosphate = 2-deoxy-D-ribose 5-phosphate. It catalyses the reaction alpha-D-ribose 1-phosphate = D-ribose 5-phosphate. Its pathway is carbohydrate degradation; 2-deoxy-D-ribose 1-phosphate degradation; D-glyceraldehyde 3-phosphate and acetaldehyde from 2-deoxy-alpha-D-ribose 1-phosphate: step 1/2. Functionally, isomerase that catalyzes the conversion of deoxy-ribose 1-phosphate (dRib-1-P) and ribose 1-phosphate (Rib-1-P) to deoxy-ribose 5-phosphate (dRib-5-P) and ribose 5-phosphate (Rib-5-P), respectively. This is Phosphopentomutase from Thermotoga maritima (strain ATCC 43589 / DSM 3109 / JCM 10099 / NBRC 100826 / MSB8).